A 336-amino-acid chain; its full sequence is Tetraacyldisaccharide 4'-kinase (336 aa).

ATP is bound at residue 60–67; sequence TVGGTGKT.

The protein belongs to the LpxK family.

The enzyme catalyses a lipid A disaccharide + ATP = a lipid IVA + ADP + H(+). The protein operates within glycolipid biosynthesis; lipid IV(A) biosynthesis; lipid IV(A) from (3R)-3-hydroxytetradecanoyl-[acyl-carrier-protein] and UDP-N-acetyl-alpha-D-glucosamine: step 6/6. Functionally, transfers the gamma-phosphate of ATP to the 4'-position of a tetraacyldisaccharide 1-phosphate intermediate (termed DS-1-P) to form tetraacyldisaccharide 1,4'-bis-phosphate (lipid IVA). The protein is Tetraacyldisaccharide 4'-kinase of Pseudomonas fluorescens (strain SBW25).